We begin with the raw amino-acid sequence, 692 residues long: Elongation factor G (692 aa).

In terms of domain architecture, tr-type G spans 8–283; sequence NRIRNIGIAA…AVIDYLPAPT (276 aa). Residues 17–24, 81–85, and 135–138 contribute to the GTP site; these read AHIDAGKT, DTPGH, and NKMD.

This sequence belongs to the TRAFAC class translation factor GTPase superfamily. Classic translation factor GTPase family. EF-G/EF-2 subfamily.

The protein localises to the cytoplasm. Its function is as follows. Catalyzes the GTP-dependent ribosomal translocation step during translation elongation. During this step, the ribosome changes from the pre-translocational (PRE) to the post-translocational (POST) state as the newly formed A-site-bound peptidyl-tRNA and P-site-bound deacylated tRNA move to the P and E sites, respectively. Catalyzes the coordinated movement of the two tRNA molecules, the mRNA and conformational changes in the ribosome. The protein is Elongation factor G (fusA) of Helicobacter pylori (strain ATCC 700392 / 26695) (Campylobacter pylori).